The following is a 965-amino-acid chain: 26S proteasome regulatory subunit rpn2 (965 aa).

PC repeat units lie at residues 385-418, 424-457, 459-493, 494-528, 530-563, 564-599, 600-632, 634-668, 669-699, and 712-744; these read TATA…PSSS, GAFY…EIVQ, GLLL…VAGS, AAGI…EKII, GLGI…TLRY, AGMF…DVRR, AAVC…PHVR, GSAI…FVRQ, GAMI…FEQV, and GATL…SAIV. Disordered regions lie at residues 826–883 and 934–965; these read AKRA…KSET and NRDA…DDDD. 2 stretches are compositionally biased toward basic and acidic residues: residues 827–856 and 874–883; these read KRAE…KEAT and SKKEEPKSET. Residues 945–965 are compositionally biased toward acidic residues; the sequence is EPGEQEASPPEDFEYPFDDDD. Phosphoserine is present on S952.

The protein belongs to the proteasome subunit S1 family.

Its function is as follows. Acts as a regulatory subunit of the 26S proteasome which is involved in the ATP-dependent degradation of ubiquitinated proteins. In Schizosaccharomyces pombe (strain 972 / ATCC 24843) (Fission yeast), this protein is 26S proteasome regulatory subunit rpn2 (rpn2).